The following is a 1163-amino-acid chain: MDLFNFDAIKISLASPEKIREWSRGEVKKPETINYRTLKPEKDGLFCEKIFGPTKDWECHCGKYKKVKYKGVVCDKCGVEVTKSKVRRERMGHIELAAPVSHIWYFKGVPSRMGLILDMTPRNLEKVLYFAAYVVIDPGDVPNLEKKQILSEKEYRELKEKYGDRFRAGMGAEAIKELLKEIDLDKLSQELRQELETATGQKKLKIIKRLEVVEAFRKSGNRPEWMILDVIPVIPPELRPMVQLDGGRFATSDLNDLYRRVINRNNRLKKLMELGAPDIIIRNEKRMLQEAVDALIDNGRRGRPVTGPGNRPLKSLSDMLKGKQGRFRQNLLGKRVDYSGRSVIVVGPELKIYQCGLPKEMALELFKPFVMKKLVEKGICNNIKNAKKAVERQRSEVWDILEEVIKDHPVLLNRAPTLHRLGIQAFEPVLVEGRAIRLHPLVCTAYNADFDGDQMAVHVPLSAEAQAEARFLMLSANNLLKPADGKPIVVPTQDMVLGIYYLTLEKKGDKGEGKIFSSEDEALLAYEHKVVGLHARIKVRRTIEKDGEVVSGIVETTPGKIILNQVIPQDLGFVDRSKKENLLKYEIDTLVDKKMLGKIIDRCIKVYGTTRTAEILDEIKELGFRFSTRGAITISVSDMVIPEVKQKLIAEAEQKVENIEKLYRHGLISDEERYEQVISIWNETKDKLTEELIQNLDEFNPIFMMASSGARGSKNQISQLAGMRGLMANPSGKTIEMPIKSNFREGLNVIEFFISTHGARKGLADTALRTADSGYLTRRLVDVAQDIIVREEDCGTEKGIEVSEIRDGTEVIETLEERIIGRYAAKDIINEKTGEVIVKRNELITEEIAKKIVDAGEKSVYVRSVLECKTRYGVCTKCYGLDLGTGQPVNVGEAVGIIAAQAIGEPGTQLTMRTFHTGGIAGQDITQGLPRVEELFEARKPKGVAIISEIEGYVSIKEDKKRTITVRNDNGEERTYEVPYGARLKVNDGDYVKAGDELTEGSINPHDLLRIKGPRGVQSYLLAEVQKVYKMQGVDINDKHIEIIIRQMMKKVKIEDPGDTELLPGDIVEIYRFEEENDRAIAEGKRPALGRRVLLGITKAALSTESFLSAASFQETTRVLTDAAIKGKVDPLIGLKENVIIGKLIPAGTGMAKYRNIIVEEKA.

Zn(2+)-binding residues include cysteine 59, cysteine 61, cysteine 74, and cysteine 77. Aspartate 449, aspartate 451, and aspartate 453 together coordinate Mg(2+). Residues cysteine 794, cysteine 868, cysteine 875, and cysteine 878 each coordinate Zn(2+).

The protein belongs to the RNA polymerase beta' chain family. As to quaternary structure, the RNAP catalytic core consists of 2 alpha, 1 beta, 1 beta' and 1 omega subunit. When a sigma factor is associated with the core the holoenzyme is formed, which can initiate transcription. It depends on Mg(2+) as a cofactor. Zn(2+) is required as a cofactor.

The catalysed reaction is RNA(n) + a ribonucleoside 5'-triphosphate = RNA(n+1) + diphosphate. DNA-dependent RNA polymerase catalyzes the transcription of DNA into RNA using the four ribonucleoside triphosphates as substrates. This chain is DNA-directed RNA polymerase subunit beta', found in Caldicellulosiruptor saccharolyticus (strain ATCC 43494 / DSM 8903 / Tp8T 6331).